Reading from the N-terminus, the 253-residue chain is Protein PET20, mitochondrial (253 aa).

The transit peptide at 1 to 36 (MLKLARPFIPPLSRNNAISSGIVLTSRRFQSSFTFL) directs the protein to the mitochondrion. The interval 44–93 (KNQMKSKRKKGSKKAAYHRQPPEHEHTAPLIKQNKTITKKEHSDVRGSHL) is disordered. Residues 47 to 60 (MKSKRKKGSKKAAY) show a composition bias toward basic residues. The span at 81–90 (TKKEHSDVRG) shows a compositional bias: basic and acidic residues.

Its subcellular location is the mitochondrion. Functionally, required for respiratory growth, stability of the mitochondrial genome and for proper assembly or maintenance of mitochondrial proteins. The sequence is that of Protein PET20, mitochondrial (PET20) from Saccharomyces cerevisiae (strain ATCC 204508 / S288c) (Baker's yeast).